Consider the following 100-residue polypeptide: Urease subunit gamma (100 aa).

Belongs to the urease gamma subunit family. Heterotrimer of UreA (gamma), UreB (beta) and UreC (alpha) subunits. Three heterotrimers associate to form the active enzyme.

Its subcellular location is the cytoplasm. The catalysed reaction is urea + 2 H2O + H(+) = hydrogencarbonate + 2 NH4(+). The protein operates within nitrogen metabolism; urea degradation; CO(2) and NH(3) from urea (urease route): step 1/1. The sequence is that of Urease subunit gamma from Corynebacterium glutamicum (strain R).